We begin with the raw amino-acid sequence, 288 residues long: Putative transcription factor kapC (288 aa).

Residues 1–10 (MQPTLAPAPH) show a composition bias toward pro residues. A disordered region spans residues 1–121 (MQPTLAPAPH…AAQRAFRQRK (121 aa)). Positions 26-41 (HDQLLAAHQHLSHPQQ) are enriched in low complexity. The segment covering 42 to 54 (ARPPPPPPQPPHM) has biased composition (pro residues). Polar residues predominate over residues 84–93 (QPDLSGQESP). Residues 100–163 (PLSTSKRAAQ…EYIINLQSRL (64 aa)) form the bZIP domain. The tract at residues 101–124 (LSTSKRAAQNRAAQRAFRQRKEAH) is basic motif. Residues 106–116 (RAAQNRAAQRA) show a composition bias toward low complexity. The segment at 128–159 (LEGKVKAYETMGEAIKALQAENYQLREYIINL) is leucine-zipper. Disordered regions lie at residues 172-226 (ELPG…NDDM) and 242-288 (PPTE…PLIS). Over residues 202 to 212 (PVPPPTAPQQP) the composition is skewed to pro residues. Residues 213 to 222 (QPAQNQASAP) are compositionally biased toward low complexity.

Belongs to the bZIP family.

The protein localises to the nucleus. Putative transcription factor. The polypeptide is Putative transcription factor kapC (kapC) (Aspergillus clavatus (strain ATCC 1007 / CBS 513.65 / DSM 816 / NCTC 3887 / NRRL 1 / QM 1276 / 107)).